Reading from the N-terminus, the 86-residue chain is RQC P-site tRNA stabilizing factor (86 aa).

The S4 RNA-binding domain occupies 1-62 (MRLDKFLKVS…QKLVTVQVNE (62 aa)).

This sequence belongs to the RqcP family. Associates with stalled 50S ribosomal subunits. Binds to RqcH, 23S rRNA and the P-site tRNA. Does not require RqcH for association with 50S subunits. Crystallized 50S subunits are variously associated with an A/P-site tRNA with or without RqcH, as well as with P- and E-site tRNAs but no RqcH. Displaced from the 50S subunit by puromycin but not thiostrepton.

In terms of biological role, key component of the ribosome quality control system (RQC), a ribosome-associated complex that mediates the extraction of incompletely synthesized nascent chains from stalled ribosomes and their subsequent degradation. RqcH recruits Ala-charged tRNA, and with RqcP directs the elongation of stalled nascent chains on 50S ribosomal subunits, leading to non-templated C-terminal alanine extensions (Ala tail). The Ala tail promotes nascent chain degradation. RqcP is associated with the translocation-like movement of the peptidyl-tRNA from the A-site into the P-site. RqcH, RqcP and charged tRNA(Ala) are necessary and sufficient to add an Ala tail to a model stalled nascent peptide; does not add Val. This chain is RQC P-site tRNA stabilizing factor, found in Bacillus subtilis (strain 168).